The following is a 123-amino-acid chain: Protein Wnt-3b (123 aa).

Ser-1 carries O-palmitoleoyl serine; by PORCN lipidation. An intrachain disulfide couples Cys-89 to Cys-104. Asn-90 carries an N-linked (GlcNAc...) asparagine glycan.

The protein belongs to the Wnt family. Post-translationally, palmitoleoylation is required for efficient binding to frizzled receptors. Depalmitoleoylation leads to Wnt signaling pathway inhibition.

It localises to the secreted. The protein resides in the extracellular space. Its subcellular location is the extracellular matrix. Functionally, ligand for members of the frizzled family of seven transmembrane receptors. Probable developmental protein. May be a signaling molecule which affects the development of discrete regions of tissues. Is likely to signal over only few cell diameters. The chain is Protein Wnt-3b (WNT-3B) from Alopias vulpinus (Common thresher shark).